A 137-amino-acid chain; its full sequence is MKEVNLVLGVIGADVHAIGNKILEYALTNAGFKVHNLGVMVSQEEFVKAALETDAKAVLVSSLYGHGEIDCRGLKEKFIEAGLDDVLLYVGGNLVVGKQDFSEVERKFKAMGFDRVFPPGTMPEEAIKALKEDLGLM.

Positions 3–137 (EVNLVLGVIG…KALKEDLGLM (135 aa)) constitute a B12-binding domain. Adenosylcob(III)alamin is bound by residues 13-17 (ADVHA), histidine 16, 61-63 (SSL), and 93-97 (NLVVG).

It belongs to the methylaspartate mutase GlmS subunit family. As to quaternary structure, heterotetramer composed of 2 epsilon subunits (GlmE) and 2 sigma subunits (GlmS). GlmE exists as a homodimer and GlmS as a monomer. Adenosylcob(III)alamin serves as cofactor.

The catalysed reaction is (2S,3S)-3-methyl-L-aspartate = L-glutamate. Its pathway is amino-acid degradation; L-glutamate degradation via mesaconate pathway; acetate and pyruvate from L-glutamate: step 1/4. Its function is as follows. Catalyzes the carbon skeleton rearrangement of L-glutamate to L-threo-3-methylaspartate ((2S,3S)-3-methylaspartate). The chain is Glutamate mutase sigma subunit from Carboxydothermus hydrogenoformans (strain ATCC BAA-161 / DSM 6008 / Z-2901).